We begin with the raw amino-acid sequence, 283 residues long: D-alanine aminotransferase (283 aa).

Residue Tyr-31 coordinates substrate. Position 50 (Arg-50) interacts with pyridoxal 5'-phosphate. Residues Arg-98 and His-100 each contribute to the substrate site. Catalysis depends on Lys-144, which acts as the Proton acceptor. An N6-(pyridoxal phosphate)lysine modification is found at Lys-144. Glu-176 is a binding site for pyridoxal 5'-phosphate.

This sequence belongs to the class-IV pyridoxal-phosphate-dependent aminotransferase family. As to quaternary structure, homodimer. It depends on pyridoxal 5'-phosphate as a cofactor.

The enzyme catalyses D-alanine + 2-oxoglutarate = D-glutamate + pyruvate. Its function is as follows. Acts on the D-isomers of alanine, leucine, aspartate, glutamate, aminobutyrate, norvaline and asparagine. The enzyme transfers an amino group from a substrate D-amino acid to the pyridoxal phosphate cofactor to form pyridoxamine and an alpha-keto acid in the first half-reaction. The second half-reaction is the reverse of the first, transferring the amino group from the pyridoxamine to a second alpha-keto acid to form the product D-amino acid via a ping-pong mechanism. This is an important process in the formation of D-alanine and D-glutamate, which are essential bacterial cell wall components. This Bacillus licheniformis protein is D-alanine aminotransferase (dat).